Reading from the N-terminus, the 53-residue chain is Membrane antigen containing repeating peptides (53 aa).

Tandem repeats lie at residues 1 to 10 (EAEEAARLQA), 11 to 20 (EAEEAARQQA), 21 to 30 (EAEEAARLQA), 31 to 40 (EAEEAARLQA), 41 to 50 (EAEEAARLQA), and 51 to 53 (EAE). Positions 1 to 53 (EAEEAARLQAEAEEAARQQAEAEEAARLQAEAEEAARLQAEAEEAARLQAEAE) are 6 X 10 AA tandem repeats. Positions 1–53 (EAEEAARLQAEAEEAARQQAEAEEAARLQAEAEEAARLQAEAEEAARLQAEAE) are disordered.

The protein resides in the membrane. The chain is Membrane antigen containing repeating peptides from Leishmania major.